We begin with the raw amino-acid sequence, 145 residues long: 3-dehydroquinate dehydratase (145 aa).

The active-site Proton acceptor is Tyr22. Residues Asn73, His79, and Asp86 each contribute to the substrate site. The active-site Proton donor is His99. Residues 100-101 and Arg110 contribute to the substrate site; that span reads LS.

This sequence belongs to the type-II 3-dehydroquinase family. In terms of assembly, homododecamer.

It carries out the reaction 3-dehydroquinate = 3-dehydroshikimate + H2O. It participates in metabolic intermediate biosynthesis; chorismate biosynthesis; chorismate from D-erythrose 4-phosphate and phosphoenolpyruvate: step 3/7. Catalyzes a trans-dehydration via an enolate intermediate. This is 3-dehydroquinate dehydratase from Prochlorococcus marinus (strain NATL1A).